The following is a 159-amino-acid chain: Dynein 18 kDa light chain, flagellar outer arm (159 aa).

3 consecutive EF-hand domains span residues 18 to 53 (EEMD…LGQN), 54 to 89 (PTEE…NKQM), and 129 to 159 (ELTV…ALLS). Ca(2+) contacts are provided by aspartate 31, aspartate 33, serine 35, threonine 37, glutamate 42, aspartate 67, aspartate 69, serine 71, cysteine 73, and glutamate 78.

As to quaternary structure, consists of at least 3 heavy chains (alpha, beta and gamma), 2 intermediate chains and 8 light chains.

The protein resides in the cell projection. It is found in the cilium. The protein localises to the flagellum. Functionally, may be involved in the calcium-mediated regulation of dynein motor function. Binds 1 mole of calcium. The sequence is that of Dynein 18 kDa light chain, flagellar outer arm from Chlamydomonas reinhardtii (Chlamydomonas smithii).